Here is a 264-residue protein sequence, read N- to C-terminus: DNA repair protein RecO (264 aa).

The protein belongs to the RecO family.

In terms of biological role, involved in DNA repair and RecF pathway recombination. This chain is DNA repair protein RecO, found in Leuconostoc citreum (strain KM20).